A 152-amino-acid polypeptide reads, in one-letter code: Nucleoside diphosphate kinase (152 aa).

6 residues coordinate ATP: Lys11, Phe59, Arg87, Thr93, Arg104, and Asn114. His117 (pros-phosphohistidine intermediate) is an active-site residue.

It belongs to the NDK family. In terms of assembly, homotetramer. Requires Mg(2+) as cofactor.

Its subcellular location is the cytoplasm. The catalysed reaction is a 2'-deoxyribonucleoside 5'-diphosphate + ATP = a 2'-deoxyribonucleoside 5'-triphosphate + ADP. The enzyme catalyses a ribonucleoside 5'-diphosphate + ATP = a ribonucleoside 5'-triphosphate + ADP. Functionally, major role in the synthesis of nucleoside triphosphates other than ATP. The ATP gamma phosphate is transferred to the NDP beta phosphate via a ping-pong mechanism, using a phosphorylated active-site intermediate. This chain is Nucleoside diphosphate kinase, found in Prochlorococcus marinus (strain AS9601).